Consider the following 655-residue polypeptide: MVLYTTPFPNSCLSALHAVSWALIFPCYWLVDRLVASFIPTTYEKRQRADDPCYLQLFCTVLFTPVYLALLVAALPFAFLGFIFWSPLQSARRPYSYSRLEDKSPAGGAALLSEWKGTGAGKSFCFATANVCLLPDSLARLNNVFNTQARAKEIGQRIRNGAARPQIKIYIDSPTNTSISAASFSSLVSPQGSDGARAVPGSIKRTASVEYKGDGGRHPSDEAANGPASGEQADGSLEDSCIVRIGGEEGGRAQEADDPAPGSQARNGAGGTPKGQTPNHNQRDGDSGSLGSPSASRESLVKARAGQDSGGSGEPGSNSKLLYKTSVVKKAAARRRRHPDEAFDHEVSAFFPANLDFLCLQEVFDKRAAAKLKEQLHGYFEYILYDVGVYGCHGCCNFKCLNSGLFFASRYPVMDVAYHCYPNGCSFDALASKGALFLKVQVGSTPQDQRIVGYIACTHLHAPPEDSAIRCEQLDLLQDWLADFRKSTSSTSTANPEELVVFDVICGDLNFDNCSSDDKLEQQHSLFTRYKDPCRLGPGEEKPWAIGTLLDINGLYDEDVCTPDNLQKVLESEEGRREYLAFPTSKSPGAGQKGRKDLLKGNGRRIDYMLHAEEGLCPDWKAEVEEFSFITQLSGLTDHLPVAMRLMVSAGEEEA.

At 1–10 (MVLYTTPFPN) the chain is on the cytoplasmic side. An intramembrane region (helical) is located at residues 11–31 (SCLSALHAVSWALIFPCYWLV). The Cytoplasmic segment spans residues 32–64 (DRLVASFIPTTYEKRQRADDPCYLQLFCTVLFT). S-palmitoyl cysteine attachment occurs at residues Cys53 and Cys59. The helical intramembrane region spans 65 to 85 (PVYLALLVAALPFAFLGFIFW). Over 86–655 (SPLQSARRPY…LMVSAGEEEA (570 aa)) the chain is Cytoplasmic. Ser178 is subject to Phosphoserine. Disordered stretches follow at residues 209-237 (VEYKGDGGRHPSDEAANGPASGEQADGSL) and 250-320 (GGRA…SNSK). Residues 211-221 (YKGDGGRHPSD) show a composition bias toward basic and acidic residues. Ser289 is modified (phosphoserine). Glu362 contacts Mg(2+). S-palmitoyl cysteine attachment occurs at residues Cys395 and Cys396. The active-site Proton acceptor is the His639.

Belongs to the neutral sphingomyelinase family. Mg(2+) is required as a cofactor. Post-translationally, palmitoylated, palmitoylation-deficient proteins are targeted for lysosomal degradation. In brain sections, it is restricted to neurons and especially prominent in large cells, including Purkinje cells, pyramidal cells, neurons of the dentate gyrus granular layer, and neurons in the pontine nuclei. Also present in the hypothalamic nuclei, neurons in the piriform cortex, and nuclei of the brainstem (at protein level). Mainly expressed in brain and jejunum. Weakly or not expressed in heart, spleen, lung, liver, kidney and testis.

It localises to the golgi apparatus membrane. It is found in the cell membrane. The catalysed reaction is a sphingomyelin + H2O = phosphocholine + an N-acylsphing-4-enine + H(+). The enzyme catalyses N-(15Z-tetracosenoyl)sphing-4-enine-1-phosphocholine + H2O = N-(15Z-tetracosenoyl)-sphing-4-enine + phosphocholine + H(+). It catalyses the reaction N-(tetracosanoyl)-sphing-4-enine-1-phosphocholine + H2O = N-tetracosanoyl-sphing-4-enine + phosphocholine + H(+). It carries out the reaction an N-(acyl)-sphingosylphosphocholine + H2O = an N-acyl-sphingoid base + phosphocholine + H(+). The catalysed reaction is 1-hexadecanoyl-sn-glycero-3-phosphocholine + H2O = 1-hexadecanoyl-sn-glycerol + phosphocholine + H(+). The enzyme catalyses 1-O-octadecyl-sn-glycero-3-phosphocholine + H2O = 1-O-octadecyl-sn-glycerol + phosphocholine + H(+). It catalyses the reaction a sphingosylphosphocholine + H2O = a sphingoid base + phosphocholine + H(+). It carries out the reaction N-(hexadecanoyl)-sphing-4-enine-1-phosphocholine + H2O = N-hexadecanoylsphing-4-enine + phosphocholine + H(+). It functions in the pathway lipid metabolism; sphingolipid metabolism. Inhibited by nSMase inhibitor GW4869. Binding of anionic phospholipids (APLs) such as phosphatidylserine (PS) and phosphatidic acid (PA) increases enzymatic activity. Catalyzes the hydrolysis of sphingomyelin to form ceramide and phosphocholine. Ceramide mediates numerous cellular functions, such as apoptosis and growth arrest, and is capable of regulating these 2 cellular events independently. Also hydrolyzes sphingosylphosphocholine. Binds to anionic phospholipids (APLs) such as phosphatidylserine (PS) and phosphatidic acid (PA) that modulate enzymatic activity and subcellular location. Regulates the cell cycle by acting as a growth suppressor in confluent cells. Acts as a regulator of postnatal development and participates in bone and dentin mineralization. May be involved in IL-1-beta-induced JNK activation in hepatocytes. May act as a mediator in transcriptional regulation of NOS2/iNOS via the NF-kappa-B activation under inflammatory conditions. The protein is Sphingomyelin phosphodiesterase 3 of Rattus norvegicus (Rat).